Here is an 89-residue protein sequence, read N- to C-terminus: Large ribosomal subunit protein bL31B (89 aa).

Belongs to the bacterial ribosomal protein bL31 family. Type B subfamily. As to quaternary structure, part of the 50S ribosomal subunit.

The polypeptide is Large ribosomal subunit protein bL31B (Haemophilus ducreyi (strain 35000HP / ATCC 700724)).